Reading from the N-terminus, the 258-residue chain is ADP-dependent (S)-NAD(P)H-hydrate dehydratase (258 aa).

Residues 1–258 (MGRLQRTLSN…VIECIPKTIR (258 aa)) form the YjeF C-terminal domain. Position 201 (Gly-201) interacts with AMP. Asp-202 is a binding site for (6S)-NADPHX.

It belongs to the NnrD/CARKD family. As to quaternary structure, homotetramer. The cofactor is Mg(2+).

The enzyme catalyses (6S)-NADHX + ADP = AMP + phosphate + NADH + H(+). It carries out the reaction (6S)-NADPHX + ADP = AMP + phosphate + NADPH + H(+). Its function is as follows. Catalyzes the dehydration of the S-form of NAD(P)HX at the expense of ADP, which is converted to AMP. Together with NAD(P)HX epimerase, which catalyzes the epimerization of the S- and R-forms, the enzyme allows the repair of both epimers of NAD(P)HX, a damaged form of NAD(P)H that is a result of enzymatic or heat-dependent hydration. The sequence is that of ADP-dependent (S)-NAD(P)H-hydrate dehydratase from Natrialba magadii (strain ATCC 43099 / DSM 3394 / CCM 3739 / CIP 104546 / IAM 13178 / JCM 8861 / NBRC 102185 / NCIMB 2190 / MS3) (Natronobacterium magadii).